The following is a 189-amino-acid chain: MPRAPRTYSKTYSVPKRPYESARLDAELKLAGEYGLKNKREIYRIGFQLSKIRRAARDLLTRDEKDPKRLFEGNALIRRLVRIGVLSEDKMKLDYVLALKPEDFLERRLQTQVFKLGLARSIHHARVLITQRHIAVGKQIVNIPSFTVRLDSQKHIDFAHNSPYGGGRAGRVKRKNQGKGGEEGAEEEE.

The region spanning 107-178 is the S4 RNA-binding domain; the sequence is RRLQTQVFKL…AGRVKRKNQG (72 aa). The disordered stretch occupies residues 160–189; that stretch reads HNSPYGGGRAGRVKRKNQGKGGEEGAEEEE.

The protein belongs to the universal ribosomal protein uS4 family. As to quaternary structure, component of the small ribosomal subunit. Mature ribosomes consist of a small (40S) and a large (60S) subunit. The 40S subunit contains about 32 different proteins and 1 molecule of RNA (18S). The 60S subunit contains 45 different proteins and 3 molecules of RNA (25S, 5.8S and 5S).

It is found in the cytoplasm. Component of the ribosome, a large ribonucleoprotein complex responsible for the synthesis of proteins in the cell. The small ribosomal subunit (SSU) binds messenger RNAs (mRNAs) and translates the encoded message by selecting cognate aminoacyl-transfer RNA (tRNA) molecules. The large subunit (LSU) contains the ribosomal catalytic site termed the peptidyl transferase center (PTC), which catalyzes the formation of peptide bonds, thereby polymerizing the amino acids delivered by tRNAs into a polypeptide chain. The nascent polypeptides leave the ribosome through a tunnel in the LSU and interact with protein factors that function in enzymatic processing, targeting, and the membrane insertion of nascent chains at the exit of the ribosomal tunnel. RPS9B is involved in nucleolar processing of pre-18S ribosomal RNA and ribosome assembly. In Candida albicans (strain SC5314 / ATCC MYA-2876) (Yeast), this protein is Small ribosomal subunit protein uS4 (RPS9B).